A 25-amino-acid chain; its full sequence is Caerin-2.3 (25 aa).

As to expression, expressed by the skin parotoid and/or rostral glands.

Its subcellular location is the secreted. Its function is as follows. Acts as a male sex pheromone that attracts females. Has no antimicrobial activity. This Ranoidea caerulea (Green tree frog) protein is Caerin-2.3.